The chain runs to 112 residues: MKNKLGIILVCNCLFSLFINRGVGAEETINIGDCSFNGHPLYGKIQLVGSFPDLTVQVVSSFPDLKVQLVESFPNQCGQWQIVTSFPDTKVQIVESFPDVKIQYVDSFPGLP.

To U.parvum UU089.1.

This is an uncharacterized protein from Synechocystis sp. (strain ATCC 27184 / PCC 6803 / Kazusa).